A 315-amino-acid chain; its full sequence is Protease HtpX homolog (315 aa).

The chain crosses the membrane as a helical span at residues 16-36; sequence LFMGIGYLIGGASGALIALVV. Residue H130 participates in Zn(2+) binding. The active site involves E131. H134 provides a ligand contact to Zn(2+). Helical transmembrane passes span 145-165 and 172-192; these read ITAT…FFGG and GPGL…AMLV. E201 contributes to the Zn(2+) binding site. The tract at residues 282–315 is disordered; the sequence is GGGGASIGRPAGPSPRGAPRSPWSGQPRARGPWG. Low complexity predominate over residues 288–303; that stretch reads IGRPAGPSPRGAPRSP.

The protein belongs to the peptidase M48B family. It depends on Zn(2+) as a cofactor.

The protein resides in the cell inner membrane. The chain is Protease HtpX homolog from Rhodopseudomonas palustris (strain BisB5).